The sequence spans 199 residues: dTTP/UTP pyrophosphatase (199 aa).

Residue aspartate 79 is the Proton acceptor of the active site.

The protein belongs to the Maf family. YhdE subfamily. The cofactor is a divalent metal cation.

It localises to the cytoplasm. The enzyme catalyses dTTP + H2O = dTMP + diphosphate + H(+). It catalyses the reaction UTP + H2O = UMP + diphosphate + H(+). Its function is as follows. Nucleoside triphosphate pyrophosphatase that hydrolyzes dTTP and UTP. May have a dual role in cell division arrest and in preventing the incorporation of modified nucleotides into cellular nucleic acids. In Porphyromonas gingivalis (strain ATCC 33277 / DSM 20709 / CIP 103683 / JCM 12257 / NCTC 11834 / 2561), this protein is dTTP/UTP pyrophosphatase.